The primary structure comprises 634 residues: DNA-directed RNA polymerase subunit gamma (634 aa).

Zn(2+)-binding residues include Cys74, Cys76, Cys89, and Cys92. The Mg(2+) site is built by Asp471, Asp473, and Asp475.

This sequence belongs to the RNA polymerase beta' chain family. RpoC1 subfamily. In cyanobacteria the RNAP catalytic core is composed of 2 alpha, 1 beta, 1 beta', 1 gamma and 1 omega subunit. When a sigma factor is associated with the core the holoenzyme is formed, which can initiate transcription. Requires Mg(2+) as cofactor. The cofactor is Zn(2+).

It catalyses the reaction RNA(n) + a ribonucleoside 5'-triphosphate = RNA(n+1) + diphosphate. Its function is as follows. DNA-dependent RNA polymerase catalyzes the transcription of DNA into RNA using the four ribonucleoside triphosphates as substrates. In Prochlorococcus marinus (strain MIT 9215), this protein is DNA-directed RNA polymerase subunit gamma.